Reading from the N-terminus, the 301-residue chain is tRNA dimethylallyltransferase 2 (301 aa).

G11–T18 is a binding site for ATP. T13–T18 lines the substrate pocket. The interaction with substrate tRNA stretch occupies residues D36–Q39.

This sequence belongs to the IPP transferase family. As to quaternary structure, monomer. It depends on Mg(2+) as a cofactor.

The catalysed reaction is adenosine(37) in tRNA + dimethylallyl diphosphate = N(6)-dimethylallyladenosine(37) in tRNA + diphosphate. Its function is as follows. Catalyzes the transfer of a dimethylallyl group onto the adenine at position 37 in tRNAs that read codons beginning with uridine, leading to the formation of N6-(dimethylallyl)adenosine (i(6)A). This Shewanella sediminis (strain HAW-EB3) protein is tRNA dimethylallyltransferase 2.